The sequence spans 336 residues: Holliday junction branch migration complex subunit RuvB (336 aa).

Positions 4-185 (MDERLLSGES…FGVLSRLEYY (182 aa)) are large ATPase domain (RuvB-L). ATP is bound by residues Leu-24, Arg-25, Gly-66, Lys-69, Thr-70, Thr-71, 132–134 (EDF), Arg-175, Tyr-185, and Arg-222. Thr-70 lines the Mg(2+) pocket. Residues 186–256 (TVDQLSAIVE…ITQMALELLQ (71 aa)) are small ATPAse domain (RuvB-S). The segment at 259–336 (KLGLDHIDHK…EHFGMEMPKV (78 aa)) is head domain (RuvB-H). Residues Arg-314 and Arg-319 each contribute to the DNA site.

The protein belongs to the RuvB family. In terms of assembly, homohexamer. Forms an RuvA(8)-RuvB(12)-Holliday junction (HJ) complex. HJ DNA is sandwiched between 2 RuvA tetramers; dsDNA enters through RuvA and exits via RuvB. An RuvB hexamer assembles on each DNA strand where it exits the tetramer. Each RuvB hexamer is contacted by two RuvA subunits (via domain III) on 2 adjacent RuvB subunits; this complex drives branch migration. In the full resolvosome a probable DNA-RuvA(4)-RuvB(12)-RuvC(2) complex forms which resolves the HJ.

It is found in the cytoplasm. It carries out the reaction ATP + H2O = ADP + phosphate + H(+). Its function is as follows. The RuvA-RuvB-RuvC complex processes Holliday junction (HJ) DNA during genetic recombination and DNA repair, while the RuvA-RuvB complex plays an important role in the rescue of blocked DNA replication forks via replication fork reversal (RFR). RuvA specifically binds to HJ cruciform DNA, conferring on it an open structure. The RuvB hexamer acts as an ATP-dependent pump, pulling dsDNA into and through the RuvAB complex. RuvB forms 2 homohexamers on either side of HJ DNA bound by 1 or 2 RuvA tetramers; 4 subunits per hexamer contact DNA at a time. Coordinated motions by a converter formed by DNA-disengaged RuvB subunits stimulates ATP hydrolysis and nucleotide exchange. Immobilization of the converter enables RuvB to convert the ATP-contained energy into a lever motion, pulling 2 nucleotides of DNA out of the RuvA tetramer per ATP hydrolyzed, thus driving DNA branch migration. The RuvB motors rotate together with the DNA substrate, which together with the progressing nucleotide cycle form the mechanistic basis for DNA recombination by continuous HJ branch migration. Branch migration allows RuvC to scan DNA until it finds its consensus sequence, where it cleaves and resolves cruciform DNA. This is Holliday junction branch migration complex subunit RuvB from Bacillus cereus (strain ZK / E33L).